Here is a 360-residue protein sequence, read N- to C-terminus: Sorbitol dehydrogenase (360 aa).

Cys-42 contributes to the Zn(2+) binding site. Tyr-48 is a binding site for substrate. Zn(2+)-binding residues include His-67 and Glu-68. A substrate-binding site is contributed by Glu-153. NAD(+) contacts are provided by residues Asp-201, Arg-206, 277–279 (AGN), and 301–303 (SFR). The substrate site is built by Arg-303 and Tyr-304.

It belongs to the zinc-containing alcohol dehydrogenase family. Homotetramer. The cofactor is Zn(2+).

It carries out the reaction keto-D-fructose + NADH + H(+) = D-sorbitol + NAD(+). Polyol dehydrogenase that catalyzes the reversible NAD(+)-dependent oxidation of various sugar alcohols. Is active with D-sorbitol (D-glucitol) as substrate, leading to the C2-oxidized product D-fructose. Suppresses growth arrest induced by a p53 tumor mutant in fission yeast. The sequence is that of Sorbitol dehydrogenase (tms1) from Schizosaccharomyces pombe (strain 972 / ATCC 24843) (Fission yeast).